Here is a 162-residue protein sequence, read N- to C-terminus: NADH-quinone oxidoreductase subunit I (162 aa).

2 4Fe-4S ferredoxin-type domains span residues 54-83 (RRYE…INST) and 93-122 (SSYE…ETNI). [4Fe-4S] cluster-binding residues include Cys-63, Cys-66, Cys-69, Cys-73, Cys-102, Cys-105, Cys-108, and Cys-112.

This sequence belongs to the complex I 23 kDa subunit family. NDH-1 is composed of 14 different subunits. Subunits NuoA, H, J, K, L, M, N constitute the membrane sector of the complex. The cofactor is [4Fe-4S] cluster.

It is found in the cell inner membrane. It carries out the reaction a quinone + NADH + 5 H(+)(in) = a quinol + NAD(+) + 4 H(+)(out). Its function is as follows. NDH-1 shuttles electrons from NADH, via FMN and iron-sulfur (Fe-S) centers, to quinones in the respiratory chain. The immediate electron acceptor for the enzyme in this species is believed to be ubiquinone. Couples the redox reaction to proton translocation (for every two electrons transferred, four hydrogen ions are translocated across the cytoplasmic membrane), and thus conserves the redox energy in a proton gradient. In Francisella tularensis subsp. holarctica (strain FTNF002-00 / FTA), this protein is NADH-quinone oxidoreductase subunit I.